The chain runs to 24 residues: Calreticulin (24 aa).

This sequence belongs to the calreticulin family. In terms of assembly, monomer. Component of an EIF2 complex at least composed of CELF1/CUGBP1, CALR, CALR3, EIF2S1, EIF2S2, HSP90B1 and HSPA5. Interacts with PDIA3/ERp57 and SPACA9. Interacts with TRIM21. Interacts with NR3C1. Interacts with PPIB. Interacts (via P-domain) with PDIA5. Interacts with CLCC1. As to expression, pancreas.

The protein resides in the endoplasmic reticulum lumen. The protein localises to the cytoplasm. Its subcellular location is the cytosol. It is found in the cytolytic granule. It localises to the secreted. The protein resides in the extracellular space. The protein localises to the extracellular matrix. Its subcellular location is the cell surface. It is found in the sarcoplasmic reticulum lumen. It localises to the cytoplasmic vesicle. The protein resides in the secretory vesicle. The protein localises to the cortical granule. Calcium-binding chaperone that promotes folding, oligomeric assembly and quality control in the endoplasmic reticulum (ER) via the calreticulin/calnexin cycle. This lectin interacts transiently with almost all of the monoglucosylated glycoproteins that are synthesized in the ER. Interacts with the DNA-binding domain of NR3C1 and mediates its nuclear export. Involved in maternal gene expression regulation. May participate in oocyte maturation via the regulation of calcium homeostasis. Present in the cortical granules of non-activated oocytes, is exocytosed during the cortical reaction in response to oocyte activation and might participate in the block to polyspermy. The protein is Calreticulin (CALR) of Canis lupus familiaris (Dog).